A 169-amino-acid polypeptide reads, in one-letter code: PTS system glucose-specific EIIA component (169 aa).

In terms of domain architecture, PTS EIIA type-1 spans 39–143 (DVVFAEKIVG…STLTPVVISN (105 aa)). Positions 76 and 91 each coordinate Zn(2+). His91 serves as the catalytic Tele-phosphohistidine intermediate; for EIIA activity. Phosphohistidine; by HPr is present on His91.

In terms of assembly, heterodimer with glycerol kinase (glpk). Zn(2+) serves as cofactor.

The protein resides in the cytoplasm. The phosphoenolpyruvate-dependent sugar phosphotransferase system (sugar PTS), a major carbohydrate active transport system, catalyzes the phosphorylation of incoming sugar substrates concomitantly with their translocation across the cell membrane. The enzyme II complex composed of PtsG and Crr is involved in glucose transport. The protein is PTS system glucose-specific EIIA component (crr) of Salmonella typhi.